Reading from the N-terminus, the 320-residue chain is Probable cell division protein WhiA (320 aa).

The segment at residues 282–315 (SLEELGRAARPQISKDAVAGRIRRLLQRAEKAEQ) is a DNA-binding region (H-T-H motif).

The protein belongs to the WhiA family.

Its function is as follows. Involved in cell division and chromosome segregation. The sequence is that of Probable cell division protein WhiA from Bifidobacterium animalis subsp. lactis (strain AD011).